The primary structure comprises 224 residues: Protein HLJ1 (224 aa).

Residues 18-87 (DKHEFYEILK…RSIYDRIGRD (70 aa)) enclose the J domain. Positions 84-93 (IGRDPDDRQM) are enriched in basic and acidic residues. The interval 84 to 107 (IGRDPDDRQMPSRGAASGFRGSAG) is disordered. Phosphoserine is present on serine 109. The segment at 173 to 192 (NRGGSPFMRQQPRSRQQQQQ) is disordered. Positions 181-192 (RQQPRSRQQQQQ) are enriched in low complexity.

In Saccharomyces cerevisiae (strain ATCC 204508 / S288c) (Baker's yeast), this protein is Protein HLJ1 (HLJ1).